The sequence spans 299 residues: Probable lipid kinase YegS (299 aa).

Residues 2–133 enclose the DAGKc domain; that stretch reads ADLPASLLIL…IDIAQVNKET (132 aa). ATP-binding positions include Thr40, 66–72, and Thr95; that span reads GDGTINE. Positions 215, 218, and 220 each coordinate Mg(2+). Glu271 acts as the Proton acceptor in catalysis.

Belongs to the diacylglycerol/lipid kinase family. YegS lipid kinase subfamily. The cofactor is Mg(2+). Ca(2+) serves as cofactor.

It localises to the cytoplasm. Functionally, probably phosphorylates lipids; the in vivo substrate is unknown. This chain is Probable lipid kinase YegS, found in Escherichia fergusonii (strain ATCC 35469 / DSM 13698 / CCUG 18766 / IAM 14443 / JCM 21226 / LMG 7866 / NBRC 102419 / NCTC 12128 / CDC 0568-73).